The following is a 160-amino-acid chain: Transcription antitermination protein NusB (160 aa).

It belongs to the NusB family.

In terms of biological role, involved in transcription antitermination. Required for transcription of ribosomal RNA (rRNA) genes. Binds specifically to the boxA antiterminator sequence of the ribosomal RNA (rrn) operons. This is Transcription antitermination protein NusB from Rhizobium etli (strain ATCC 51251 / DSM 11541 / JCM 21823 / NBRC 15573 / CFN 42).